Here is a 131-residue protein sequence, read N- to C-terminus: RxLR effector protein 62 (131 aa).

Positions methionine 1–serine 19 are cleaved as a signal peptide. The short motif at arginine 49 to arginine 60 is the RxLR-dEER element. N-linked (GlcNAc...) asparagine glycosylation occurs at asparagine 61.

The protein belongs to the RxLR effector family.

The protein localises to the secreted. It is found in the host cell. Functionally, secreted effector that suppresses callose deposition, a hallmark of pathogen-associated molecular pattern (PAMP)-triggered immunity (PTI) and renders host plants more susceptible to bacterial infection. Reduces host plant responsiveness to salicylic acid (SA) in haustoriated cells into which host-translocated effectors are delivered. This is RxLR effector protein 62 from Hyaloperonospora arabidopsidis (strain Emoy2) (Downy mildew agent).